We begin with the raw amino-acid sequence, 344 residues long: N-acetyl-gamma-glutamyl-phosphate reductase 1 (344 aa).

Residue Cys150 is part of the active site.

This sequence belongs to the NAGSA dehydrogenase family. Type 1 subfamily.

The protein resides in the cytoplasm. The catalysed reaction is N-acetyl-L-glutamate 5-semialdehyde + phosphate + NADP(+) = N-acetyl-L-glutamyl 5-phosphate + NADPH + H(+). It functions in the pathway amino-acid biosynthesis; L-arginine biosynthesis; N(2)-acetyl-L-ornithine from L-glutamate: step 3/4. In terms of biological role, catalyzes the NADPH-dependent reduction of N-acetyl-5-glutamyl phosphate to yield N-acetyl-L-glutamate 5-semialdehyde. This Pseudomonas putida (strain ATCC 47054 / DSM 6125 / CFBP 8728 / NCIMB 11950 / KT2440) protein is N-acetyl-gamma-glutamyl-phosphate reductase 1.